The following is a 132-amino-acid chain: Small ribosomal subunit protein uS8 (132 aa).

This sequence belongs to the universal ribosomal protein uS8 family. As to quaternary structure, part of the 30S ribosomal subunit. Contacts proteins S5 and S12.

Functionally, one of the primary rRNA binding proteins, it binds directly to 16S rRNA central domain where it helps coordinate assembly of the platform of the 30S subunit. The protein is Small ribosomal subunit protein uS8 of Clavibacter michiganensis subsp. michiganensis (strain NCPPB 382).